Reading from the N-terminus, the 150-residue chain is N-alpha-acetyltransferase 30 (150 aa).

In terms of domain architecture, N-acetyltransferase spans 2 to 150 (VTIVPYSHQY…DAFRYILYPN (149 aa)).

This sequence belongs to the acetyltransferase family. MAK3 subfamily.

Its subcellular location is the cytoplasm. It is found in the nucleus. The enzyme catalyses N-terminal L-methionyl-L-leucyl-[protein] + acetyl-CoA = N-terminal N(alpha)-acetyl-L-methionyl-L-leucyl-[protein] + CoA + H(+). It catalyses the reaction N-terminal L-methionyl-L-isoleucyl-[protein] + acetyl-CoA = N-terminal N(alpha)-acetyl-L-methionyl-L-isoleucyl-[protein] + CoA + H(+). It carries out the reaction N-terminal L-methionyl-L-phenylalanyl-[protein] + acetyl-CoA = N-terminal N(alpha)-acetyl-L-methionyl-L-phenylalanyl-[protein] + CoA + H(+). The catalysed reaction is N-terminal L-methionyl-L-tryptophyl-[protein] + acetyl-CoA = N-terminal N(alpha)-acetyl-L-methionyl-L-tryptophyl-[protein] + CoA + H(+). The enzyme catalyses N-terminal L-methionyl-L-tyrosyl-[protein] + acetyl-CoA = N-terminal N(alpha)-acetyl-L-methionyl-L-tyrosyl-[protein] + CoA + H(+). Catalytic component of the NatC N-terminal acetyltransferase. This Schizosaccharomyces pombe (strain 972 / ATCC 24843) (Fission yeast) protein is N-alpha-acetyltransferase 30 (naa30).